The following is a 415-amino-acid chain: Dynein assembly factor with WD repeat domains 1 (415 aa).

8 WD repeats span residues 90–129, 132–174, 175–214, 217–256, 259–298, 301–340, 343–384, and 386–415; these read AHILPLTNVALNKSGSCFITGSYDRTCKLWDTASGEELNT, GHRN…HTFR, GHTAEIVCLSFNPQSTLVATGSMDTTAKLWNIQNGEEVCT, GHSAEIISLSFNTSGDRIITGSFDHTVVVWDADTGGKVNI, GHCAEISSALFNWDCSLILTGSMDKTCMLWDATNGKCVAT, GHDDEILDSCFDYTGKLIATASADGTARIFSAATRKCIAK, GHEG…QVLE, and HTDEIFSCTFNYKGNIVITGSKDNTCRIWR.

This sequence belongs to the WD repeat WDR69 family. As to quaternary structure, interacts with IFT46.

Its subcellular location is the cytoplasm. The protein resides in the cytoskeleton. The protein localises to the flagellum basal body. It localises to the flagellum axoneme. Functionally, required for axonemal dynein assembly and ciliary motility in ciliated organs, including Kupffer's vesicle, during embryogenesis. Facilitates the onset of robust cilia motility during development. This chain is Dynein assembly factor with WD repeat domains 1 (DAW1), found in Macaca fascicularis (Crab-eating macaque).